The chain runs to 549 residues: Cytoplasmic trehalase (549 aa).

Substrate contacts are provided by residues arginine 168, 175–176 (WD), asparagine 212, 221–223 (RSQ), 292–294 (RDE), and glycine 324. Catalysis depends on proton donor/acceptor residues aspartate 326 and glutamate 509. Glutamate 525 contacts substrate.

The protein belongs to the glycosyl hydrolase 37 family. In terms of assembly, monomer.

The protein localises to the cytoplasm. It carries out the reaction alpha,alpha-trehalose + H2O = alpha-D-glucose + beta-D-glucose. It participates in glycan degradation; trehalose degradation; D-glucose from alpha,alpha-trehalose: step 1/1. Its function is as follows. Hydrolyzes trehalose to glucose. Could be involved, in cells returning to low osmolarity conditions, in the utilization of the accumulated cytoplasmic trehalose, which was synthesized in response to high osmolarity. In Shigella flexneri serotype 5b (strain 8401), this protein is Cytoplasmic trehalase.